We begin with the raw amino-acid sequence, 408 residues long: Peptidase T (408 aa).

His-78 contributes to the Zn(2+) binding site. Asp-80 is an active-site residue. A Zn(2+)-binding site is contributed by Asp-141. The active-site Proton acceptor is the Glu-175. Positions 176, 198, and 380 each coordinate Zn(2+).

This sequence belongs to the peptidase M20B family. The cofactor is Zn(2+).

It is found in the cytoplasm. It carries out the reaction Release of the N-terminal residue from a tripeptide.. Its function is as follows. Cleaves the N-terminal amino acid of tripeptides. The polypeptide is Peptidase T (Clostridium botulinum (strain 657 / Type Ba4)).